The chain runs to 1392 residues: Condensin complex subunit 1 (1392 aa).

An interaction with SMC2 and SMC4 region spans residues 1–593; sequence MSPHNFEFHL…TGSKDSPSVP (593 aa). Residues serine 20 and serine 575 each carry the phosphoserine modification. Disordered stretches follow at residues 569-602, 945-966, and 1293-1392; these read EAST…QSND, REEQ…ETTM, and FETG…RHRS. Residues 945-960 show a composition bias toward basic and acidic residues; the sequence is REEQEHRAKEPKEKTA. Residues serine 1300, serine 1305, serine 1320, and serine 1323 each carry the phosphoserine modification. Position 1329 is a phosphothreonine (threonine 1329). A Bipartite nuclear localization signal motif is present at residues 1332-1353; it reads PRRTKPGRPQTQQRKKSQRKAK. Residues 1344–1353 show a composition bias toward basic residues; it reads QRKKSQRKAK. Phosphoserine occurs at positions 1358, 1361, 1362, and 1367. A compositionally biased stretch (acidic residues) spans 1360–1373; sequence ESSEDELSAEMTEE. Phosphothreonine; by CDK1 is present on residues threonine 1375 and threonine 1380. Serine 1386 is subject to Phosphoserine.

Belongs to the CND1 (condensin subunit 1) family. Component of the condensin complex, which contains the SMC2 and SMC4 heterodimer, and three non SMC subunits that probably regulate the complex: NCAPH/BRRN1, NCAPD2/CAPD2 and NCAPG. Interacts with histones H1 and H3. Post-translationally, phosphorylated by CDK1. Its phosphorylation, as well as that of NCAPH and NCAPG subunits, activates the condensin complex and is required for chromosome condensation.

The protein localises to the nucleus. The protein resides in the cytoplasm. It localises to the chromosome. Regulatory subunit of the condensin complex, a complex required for conversion of interphase chromatin into mitotic-like condense chromosomes. The condensin complex probably introduces positive supercoils into relaxed DNA in the presence of type I topoisomerases and converts nicked DNA into positive knotted forms in the presence of type II topoisomerases. May target the condensin complex to DNA via its C-terminal domain. May promote the resolution of double-strand DNA catenanes (intertwines) between sister chromatids. Condensin-mediated compaction likely increases tension in catenated sister chromatids, providing directionality for type II topoisomerase-mediated strand exchanges toward chromatid decatenation. Required for decatenation of non-centromeric ultrafine DNA bridges during anaphase. Early in neurogenesis, may play an essential role to ensure accurate mitotic chromosome condensation in neuron stem cells, ultimately affecting neuron pool and cortex size. The chain is Condensin complex subunit 1 (Ncapd2) from Mus musculus (Mouse).